We begin with the raw amino-acid sequence, 354 residues long: N-acetyl-gamma-glutamyl-phosphate reductase (354 aa).

The active site involves cysteine 156.

Belongs to the NAGSA dehydrogenase family. Type 1 subfamily.

It is found in the cytoplasm. It carries out the reaction N-acetyl-L-glutamate 5-semialdehyde + phosphate + NADP(+) = N-acetyl-L-glutamyl 5-phosphate + NADPH + H(+). It participates in amino-acid biosynthesis; L-arginine biosynthesis; N(2)-acetyl-L-ornithine from L-glutamate: step 3/4. Its function is as follows. Catalyzes the NADPH-dependent reduction of N-acetyl-5-glutamyl phosphate to yield N-acetyl-L-glutamate 5-semialdehyde. The protein is N-acetyl-gamma-glutamyl-phosphate reductase of Bordetella bronchiseptica (strain ATCC BAA-588 / NCTC 13252 / RB50) (Alcaligenes bronchisepticus).